The sequence spans 445 residues: UPF0210 protein SPH_0352 (445 aa).

The protein belongs to the UPF0210 family. In terms of assembly, homodimer.

The polypeptide is UPF0210 protein SPH_0352 (Streptococcus pneumoniae (strain Hungary19A-6)).